Here is a 1479-residue protein sequence, read N- to C-terminus: DNA-directed RNA polymerase subunit beta'' (1479 aa).

Zn(2+)-binding residues include Cys-220, Cys-296, Cys-303, and Cys-306. Disordered regions lie at residues 618 to 640 and 663 to 756; these read TRAE…REDE and LEDE…KKEG. Composition is skewed to acidic residues over residues 622–631, 704–717, and 731–749; these read DSEEEYETLE, DEYG…EDEY, and LEED…PEED.

Belongs to the RNA polymerase beta' chain family. RpoC2 subfamily. In plastids the minimal PEP RNA polymerase catalytic core is composed of four subunits: alpha, beta, beta', and beta''. When a (nuclear-encoded) sigma factor is associated with the core the holoenzyme is formed, which can initiate transcription. Zn(2+) serves as cofactor.

It is found in the plastid. Its subcellular location is the chloroplast. The enzyme catalyses RNA(n) + a ribonucleoside 5'-triphosphate = RNA(n+1) + diphosphate. DNA-dependent RNA polymerase catalyzes the transcription of DNA into RNA using the four ribonucleoside triphosphates as substrates. This chain is DNA-directed RNA polymerase subunit beta'', found in Triticum aestivum (Wheat).